The following is a 415-amino-acid chain: Gamma-glutamyl phosphate reductase (415 aa).

Belongs to the gamma-glutamyl phosphate reductase family.

The protein resides in the cytoplasm. The catalysed reaction is L-glutamate 5-semialdehyde + phosphate + NADP(+) = L-glutamyl 5-phosphate + NADPH + H(+). It participates in amino-acid biosynthesis; L-proline biosynthesis; L-glutamate 5-semialdehyde from L-glutamate: step 2/2. Catalyzes the NADPH-dependent reduction of L-glutamate 5-phosphate into L-glutamate 5-semialdehyde and phosphate. The product spontaneously undergoes cyclization to form 1-pyrroline-5-carboxylate. The protein is Gamma-glutamyl phosphate reductase of Carboxydothermus hydrogenoformans (strain ATCC BAA-161 / DSM 6008 / Z-2901).